The following is a 160-amino-acid chain: Cyanate hydratase (160 aa).

Catalysis depends on residues arginine 100, glutamate 103, and serine 126.

The protein belongs to the cyanase family.

It catalyses the reaction cyanate + hydrogencarbonate + 3 H(+) = NH4(+) + 2 CO2. Its function is as follows. Catalyzes the reaction of cyanate with bicarbonate to produce ammonia and carbon dioxide. The chain is Cyanate hydratase from Penicillium rubens (strain ATCC 28089 / DSM 1075 / NRRL 1951 / Wisconsin 54-1255) (Penicillium chrysogenum).